Here is a 261-residue protein sequence, read N- to C-terminus: Pantothenate synthetase (261 aa).

Residue 29–36 (MGALHNGH) participates in ATP binding. The active-site Proton donor is the H36. Q60 lines the (R)-pantoate pocket. Q60 serves as a coordination point for beta-alanine. 147 to 150 (GEKD) provides a ligand contact to ATP. Q153 lines the (R)-pantoate pocket. An ATP-binding site is contributed by 184-187 (LSSR).

This sequence belongs to the pantothenate synthetase family. Homodimer.

The protein resides in the cytoplasm. It catalyses the reaction (R)-pantoate + beta-alanine + ATP = (R)-pantothenate + AMP + diphosphate + H(+). Its pathway is cofactor biosynthesis; (R)-pantothenate biosynthesis; (R)-pantothenate from (R)-pantoate and beta-alanine: step 1/1. Functionally, catalyzes the condensation of pantoate with beta-alanine in an ATP-dependent reaction via a pantoyl-adenylate intermediate. The polypeptide is Pantothenate synthetase (Francisella tularensis subsp. holarctica (strain FTNF002-00 / FTA)).